The primary structure comprises 346 residues: Probable RNA methyltransferase Pmen_2155 (346 aa).

The active-site Proton acceptor is the Glu-91. The Radical SAM core domain occupies 94 to 320; it reads LLPRDGLCIS…TKVRNSAGQD (227 aa). Residues Cys-101 and Cys-325 are joined by a disulfide bond. 3 residues coordinate [4Fe-4S] cluster: Cys-108, Cys-112, and Cys-115. Residues 153–154, Ser-183, 206–208, and Asn-282 each bind S-adenosyl-L-methionine; these read GE and SLH. Catalysis depends on Cys-325, which acts as the S-methylcysteine intermediate.

It belongs to the radical SAM superfamily. RlmN family. The cofactor is [4Fe-4S] cluster.

The protein localises to the cytoplasm. In Ectopseudomonas mendocina (strain ymp) (Pseudomonas mendocina), this protein is Probable RNA methyltransferase Pmen_2155.